Reading from the N-terminus, the 29-residue chain is Kappa-sparatoxin-Hv1e (29 aa).

Disulfide bonds link Cys3-Cys17, Cys10-Cys22, and Cys16-Cys26.

In terms of tissue distribution, expressed by the venom gland.

It localises to the secreted. Its function is as follows. Inhibitor of voltage-gated potassium channels of the Kv4/KCND family. Blocks calcium channels (Cav). The chain is Kappa-sparatoxin-Hv1e from Heteropoda venatoria (Brown huntsman spider).